The following is a 2290-amino-acid chain: MGRIQEVGWVTAGLVIWAGTCYYIYKFTKGRAQSVRTLARNGSTVKMETVVGVQSQTLAINEAEIKTKPQVEIGAETGARSGPRAEVETKATAIAIHRANSQAKAMVGAEPETQSESKVVAGTLVMTEAVTLTEVKAKAREVAMKEAVTQTDAEAGKIVKKEAVTQTKAKAWALVAKTEAKREAMTQTKAETHILAEKETEINRVMVTQSETLAVPREVAKMGATNKTGIVDETKTRALEETVSVAKTQSEARPGATVDARGNPNGMSREVAGVDMKSCAQSQAVTKIQGDDMPGTGVEDMGNCKTMSRAESGADTRASAQPQIFAKTQTEAIPGAKIDAGGNTNAMCKVGAGADVRACIQPQTVAKKQAEVTSGARVDGRGNTNVISKAITGADMRAAAQPQAVASTHAEAMSDAKVKNRGNPNAMTKAGAKANLRANSQVEALPDARDKSRGNPNVMAKVGDGTDMLSCTQPQLVASVQADTLSDGKIKVRGNVNTMPKEGAGVDMKAQGMAQSQGEALPNTRGKARGKAKAKCKTGPGMDMKTCTQPQAGVKTPAEALLDSRVDGRGNPNATSKAGTKADQRVCGQPLVVANPQGEALPGAKNKVKGNPHTVLKVGAGEGTTDSAQPEAVVSFQGEALLGTKNKVKGNPNVVLKAEVGEGAMGTAQLQIMASSKGEALLDSKNKVKGNSNAVSKAGAGTDTTGSVQPQIVANSQGEVLPGAKNKIRGNPTTVPNSGVGPYTTDSARLQAVANSQGEVLPGAKNKVKANLNAVSKAEAGMGATGSVQPQAVANSHCETLPGAKNKVRGNWNAVSKAGAGMDTRGSAQPQAVANSQGEVLPGAKNKVKGNPNVVSKAGAREDTVGSTQPQVLASSQRETLPGARNKVKGNSNVVSKAGAREDTMGSAQPQVVANSQRETLPGARNKVKGNSNAISKAEAGAGIMGSVQVQVVASFQGEVLPGAKNKVRGNSNAVPKAEAGADTVGSAQPQAVANSQSETLLGARNKVKGNTIAVPKAGTGAGTRHSAQPQIVAGSQGETLPGARDKSMSTSEAEATAEDEAYAKPEAEAMPTSESEGGSGTQACRKTQPNIHDYYWNGIGVEDWIAAERWIKFRFQTMDGDWENSVSWADDENEASIGSWSGASDKAGIIRSWAVACDETSVKSWAGARAENVVGIGTWARAGEQASGGLWAGGQTSEGTWAGDKASGGAWTGAENQASGGSWALAGNQAIGELWAAGQASDGSWPGGQASGVSWVGEEAIGGSWTGAENQASEGSWAGAGAGNMSSVSYWAGVVDQAGGGSWAGTSDQSGGGSKPRFEDQASGEGSWAGAGGQASGGSMLGPEDQSSGRSWADTADQASGGSRLGHVDQSSGGAWAGTLDQSGGGSKPRFENQTTEEGSWAGAGGQAGGGSKVGPEDQSSGRSWANSGDQISGGFLVGIVDQANGGSWTGAGHPASVGPKPIFEDQVSGRGSWADAREQVVGDSRLGLRDQSSGDSWAGTGDQASGWFCVCPGSQTNGGSWGGASGQDVGGSRPGPTNQSSAGSWDSPGSQVSGSCWTGAGAVDQAGGCSKPGFEDQAIGGGFWPGAGDQTGGGSRPGSEDQSSGIGSWGVAGGQVLGGARPGPADQSSGGSWAGTGNQSSGRSWIGPGDQAVDCSKPEFEDQACGGGSWAGAGSQASGESWAGSRPGNEAIGGSRMGSEDQATGGSWARSEDQASGRFQVSFEVEANEGFWFGPGAEAVIGSWCWTEEKADIVSRPDDKDEATTASRSGAGEEAMICSRIEAENKASSGSWIRSEEVAYMGSCVGAEAGAGAEAGAGAEAGAGAGAEAGAEAGAGAGAGPGTESGAGIWSWDGDATTVESRLGAGEEAGVESWTLARNVGEDELSRESSPDIEEISLRSLFWAESENSNTFRSKSGKDASFESGAGDNTSIKDKFEAAGGVDIGSWFCAGNENTSEDKSAPKAKAKKSSESRGIYPYMVPGAGMGSWDGAMIWSETKFAHQSEASFPVEDESRKQTRTGEKTRPWSCRCKHEANMDPRDLEKLICMIEMTEDPSVHEIANNALYNSADYSYSHEVVRNVGGISVIESLLNNPYPSVRQKALNALNNISVAAENHRKVKTYLNQVCEDTVTYPLNSNVQLAGLRLIRHLTITSEYQHMVTNYISEFLRLLTVGSGETKDHVLGMLLNFSKNPSMTKDLLIANAPTSLINIFSKKETKENILNALSLFENINYHFKRRAKAFTQDKFSKNSLYFLFQRPKACAKKLRALAAECNDPEVKERVELLISKL.

Residues Val7 to Ile24 traverse the membrane as a helical segment. Disordered regions lie at residues Gln517 to Gln549, Ser564 to Asp583, Lys967 to Ala988, Ala1014 to Lys1087, Gly1302 to Gly1430, Gly1521 to Asp1715, Ser1911 to Asn1931, and Asn1954 to Glu1973. Residues Gly526 to Cys536 are compositionally biased toward basic residues. Residues Thr1073–Lys1087 are compositionally biased toward polar residues. Composition is skewed to gly residues over residues Ser1328–Met1341 and Ala1403–Lys1414. Over residues Asp1419–Gly1430 the composition is skewed to polar residues. Gly residues predominate over residues Gly1521–Arg1535. The span at Gly1537–Cys1558 shows a compositional bias: polar residues. Gly residues-rich tracts occupy residues Ile1581–Arg1598 and Gly1609–Arg1623. The span at Asp1628–Arg1645 shows a compositional bias: polar residues. Residues Gly1674–Ser1687 are compositionally biased toward low complexity. ARM repeat units lie at residues Arg2031 to Asp2071, Ser2073 to Val2112, Ile2153 to Lys2192, and Pro2194 to Tyr2234.

The protein belongs to the eutherian X-chromosome-specific Armcx family.

The protein resides in the membrane. The polypeptide is Armadillo repeat-containing X-linked protein 4 (ARMCX4) (Homo sapiens (Human)).